The primary structure comprises 268 residues: Putative hydro-lyase A1S_1268 (268 aa).

Belongs to the D-glutamate cyclase family.

The protein is Putative hydro-lyase A1S_1268 of Acinetobacter baumannii (strain ATCC 17978 / DSM 105126 / CIP 53.77 / LMG 1025 / NCDC KC755 / 5377).